The following is a 244-amino-acid chain: Probable proteasome subunit alpha type-1 (244 aa).

The protein belongs to the peptidase T1A family. In terms of assembly, the 26S proteasome consists of a 20S proteasome core and two 19S regulatory subunits. The 20S proteasome core is composed of 28 subunits that are arranged in four stacked rings, resulting in a barrel-shaped structure. The two end rings are each formed by seven alpha subunits, and the two central rings are each formed by seven beta subunits. The catalytic chamber with the active sites is on the inside of the barrel.

The protein resides in the cytoplasm. The protein localises to the nucleus. In terms of biological role, the proteasome is a multicatalytic proteinase complex which is characterized by its ability to cleave peptides with Arg, Phe, Tyr, Leu, and Glu adjacent to the leaving group at neutral or slightly basic pH. The proteasome has an ATP-dependent proteolytic activity. This is Probable proteasome subunit alpha type-1 from Schizosaccharomyces pombe (strain 972 / ATCC 24843) (Fission yeast).